We begin with the raw amino-acid sequence, 241 residues long: Small ribosomal subunit protein uS2 (241 aa).

The protein belongs to the universal ribosomal protein uS2 family.

The chain is Small ribosomal subunit protein uS2 from Hamiltonella defensa subsp. Acyrthosiphon pisum (strain 5AT).